A 154-amino-acid chain; its full sequence is Xanthine-guanine phosphoribosyltransferase (154 aa).

Residues 37-38, R69, and 88-96 contribute to the 5-phospho-alpha-D-ribose 1-diphosphate site; these read RG and EDLVDSGDT. R69 serves as a coordination point for GMP. Residue D89 coordinates Mg(2+). Residues D92 and I135 each contribute to the guanine site. Xanthine contacts are provided by D92 and I135. Residues 92–96 and 134–135 contribute to the GMP site; these read DSGDT and WI.

It belongs to the purine/pyrimidine phosphoribosyltransferase family. XGPT subfamily. In terms of assembly, homotetramer. Mg(2+) serves as cofactor.

The protein resides in the cell inner membrane. The catalysed reaction is GMP + diphosphate = guanine + 5-phospho-alpha-D-ribose 1-diphosphate. The enzyme catalyses XMP + diphosphate = xanthine + 5-phospho-alpha-D-ribose 1-diphosphate. It catalyses the reaction IMP + diphosphate = hypoxanthine + 5-phospho-alpha-D-ribose 1-diphosphate. The protein operates within purine metabolism; GMP biosynthesis via salvage pathway; GMP from guanine: step 1/1. It participates in purine metabolism; XMP biosynthesis via salvage pathway; XMP from xanthine: step 1/1. Purine salvage pathway enzyme that catalyzes the transfer of the ribosyl-5-phosphate group from 5-phospho-alpha-D-ribose 1-diphosphate (PRPP) to the N9 position of the 6-oxopurines guanine and xanthine to form the corresponding ribonucleotides GMP (guanosine 5'-monophosphate) and XMP (xanthosine 5'-monophosphate), with the release of PPi. To a lesser extent, also acts on hypoxanthine. This is Xanthine-guanine phosphoribosyltransferase from Vibrio parahaemolyticus serotype O3:K6 (strain RIMD 2210633).